The following is a 518-amino-acid chain: T-box transcription factor TBX5 (518 aa).

A disordered region spans residues 1–46; it reads MADTDEGFGLARTPLEPDSKDRSCDSKPESALGAPSKSPSSPQAAF. The span at 15–28 shows a compositional bias: basic and acidic residues; the sequence is LEPDSKDRSCDSKP. Residues 34–45 are compositionally biased toward low complexity; it reads APSKSPSSPQAA. Positions 58–238 form a DNA-binding region, T-box; it reads LHERELWLKF…NNPFAKGFRG (181 aa). 2 disordered regions span residues 254 to 307 and 330 to 352; these read EYPV…LLPP and ECSSTEHPYKKPYMETSPSEEDT. Positions 269–301 are enriched in polar residues; it reads SNHSPFSSETRALSTSSNLGSQYQCENGVSGPS. An N6-acetyllysine modification is found at Lys-339.

As to quaternary structure, monomer. Homodimer (via the T-box); binds DNA as homodimer. Interacts (via the T-box) with NKX2-5 (via the homeobox); this complex binds DNA. Interacts with GATA4. Interacts with KAT2A and KAT2B. Post-translationally, acetylation at Lys-339 by KAT2A and KAT2B promotes nuclear retention.

It is found in the nucleus. The protein resides in the cytoplasm. DNA-binding protein that regulates the transcription of several genes and is involved in heart development and limb pattern formation. Binds to the core DNA motif of NPPA promoter. This Mus musculus (Mouse) protein is T-box transcription factor TBX5 (Tbx5).